Reading from the N-terminus, the 749-residue chain is NAD(P)H-quinone oxidoreductase subunit 5, chloroplastic (749 aa).

The next 17 membrane-spanning stretches (helical) occupy residues 9–29 (WIIP…LLLF), 40–60 (WAFQ…NLSI), 89–109 (IDPL…MVLI), 125–145 (FAYM…SNLI), 147–167 (IYIF…FWFT), 185–205 (GDFG…SFEF), 219–239 (NEVN…GAVA), 258–278 (TPIS…FLVA), 290–312 (IMNF…ALAQ), 327–347 (LGYM…FHLI), 354–374 (ALLF…VGYC), 396–416 (TSFL…CFWS), 425–445 (WLYS…TAFY), 549–569 (LFPI…GIPF), 608–628 (VFSV…YKPV), 694–714 (IIDG…EVIK), and 725–745 (LFFY…LNVF).

It belongs to the complex I subunit 5 family. NDH is composed of at least 16 different subunits, 5 of which are encoded in the nucleus.

The protein localises to the plastid. It is found in the chloroplast thylakoid membrane. The enzyme catalyses a plastoquinone + NADH + (n+1) H(+)(in) = a plastoquinol + NAD(+) + n H(+)(out). It catalyses the reaction a plastoquinone + NADPH + (n+1) H(+)(in) = a plastoquinol + NADP(+) + n H(+)(out). Functionally, NDH shuttles electrons from NAD(P)H:plastoquinone, via FMN and iron-sulfur (Fe-S) centers, to quinones in the photosynthetic chain and possibly in a chloroplast respiratory chain. The immediate electron acceptor for the enzyme in this species is believed to be plastoquinone. Couples the redox reaction to proton translocation, and thus conserves the redox energy in a proton gradient. The chain is NAD(P)H-quinone oxidoreductase subunit 5, chloroplastic (ndhF) from Atractylodes lancea (Atractylodes japonica).